We begin with the raw amino-acid sequence, 529 residues long: Berberine bridge enzyme-like 7 (529 aa).

The N-terminal stretch at 1-19 (MKEALSILCLALLVSVSEA) is a signal peptide. An intrachain disulfide couples Cys-32 to Cys-95. A glycan (N-linked (GlcNAc...) asparagine) is linked at Asn-52. One can recognise an FAD-binding PCMH-type domain in the interval 69–247 (YSSPNFKKLL…LSWKINLVKV (179 aa)). Positions 110–172 (HDLEGLSYRS…QTLAFPAGVC (63 aa)) form a cross-link, 6-(S-cysteinyl)-8alpha-(pros-histidyl)-FAD (His-Cys). 3 N-linked (GlcNAc...) asparagine glycosylation sites follow: Asn-257, Asn-341, and Asn-439.

It belongs to the oxygen-dependent FAD-linked oxidoreductase family. FAD serves as cofactor. In terms of processing, the FAD cofactor is bound via a bicovalent 6-S-cysteinyl, 8alpha-N1-histidyl FAD linkage.

Its subcellular location is the secreted. It localises to the cell wall. Functionally, probable flavin-dependent oxidoreductase. This is Berberine bridge enzyme-like 7 from Arabidopsis thaliana (Mouse-ear cress).